Reading from the N-terminus, the 285-residue chain is Bifunctional protein FolD (285 aa).

NADP(+) contacts are provided by residues 165–167 (GRS) and Ser190.

Belongs to the tetrahydrofolate dehydrogenase/cyclohydrolase family. Homodimer.

It carries out the reaction (6R)-5,10-methylene-5,6,7,8-tetrahydrofolate + NADP(+) = (6R)-5,10-methenyltetrahydrofolate + NADPH. It catalyses the reaction (6R)-5,10-methenyltetrahydrofolate + H2O = (6R)-10-formyltetrahydrofolate + H(+). It participates in one-carbon metabolism; tetrahydrofolate interconversion. Its function is as follows. Catalyzes the oxidation of 5,10-methylenetetrahydrofolate to 5,10-methenyltetrahydrofolate and then the hydrolysis of 5,10-methenyltetrahydrofolate to 10-formyltetrahydrofolate. This chain is Bifunctional protein FolD, found in Staphylococcus saprophyticus subsp. saprophyticus (strain ATCC 15305 / DSM 20229 / NCIMB 8711 / NCTC 7292 / S-41).